The sequence spans 316 residues: Acetyl-coenzyme A carboxylase carboxyl transferase subunit alpha (316 aa).

Residues 24-291 enclose the CoA carboxyltransferase C-terminal domain; sequence NIKDKADIVD…KEALIQQLNE (268 aa).

The protein belongs to the AccA family. In terms of assembly, acetyl-CoA carboxylase is a heterohexamer composed of biotin carboxyl carrier protein (AccB), biotin carboxylase (AccC) and two subunits each of ACCase subunit alpha (AccA) and ACCase subunit beta (AccD).

Its subcellular location is the cytoplasm. The catalysed reaction is N(6)-carboxybiotinyl-L-lysyl-[protein] + acetyl-CoA = N(6)-biotinyl-L-lysyl-[protein] + malonyl-CoA. It participates in lipid metabolism; malonyl-CoA biosynthesis; malonyl-CoA from acetyl-CoA: step 1/1. In terms of biological role, component of the acetyl coenzyme A carboxylase (ACC) complex. First, biotin carboxylase catalyzes the carboxylation of biotin on its carrier protein (BCCP) and then the CO(2) group is transferred by the carboxyltransferase to acetyl-CoA to form malonyl-CoA. This is Acetyl-coenzyme A carboxylase carboxyl transferase subunit alpha from Ruthia magnifica subsp. Calyptogena magnifica.